Reading from the N-terminus, the 232-residue chain is Ubiquinone biosynthesis O-methyltransferase (232 aa).

Arg-36, Gly-55, Asp-76, and Leu-120 together coordinate S-adenosyl-L-methionine.

This sequence belongs to the methyltransferase superfamily. UbiG/COQ3 family.

The enzyme catalyses a 3-demethylubiquinol + S-adenosyl-L-methionine = a ubiquinol + S-adenosyl-L-homocysteine + H(+). The catalysed reaction is a 3-(all-trans-polyprenyl)benzene-1,2-diol + S-adenosyl-L-methionine = a 2-methoxy-6-(all-trans-polyprenyl)phenol + S-adenosyl-L-homocysteine + H(+). Its pathway is cofactor biosynthesis; ubiquinone biosynthesis. In terms of biological role, O-methyltransferase that catalyzes the 2 O-methylation steps in the ubiquinone biosynthetic pathway. The sequence is that of Ubiquinone biosynthesis O-methyltransferase from Azotobacter vinelandii (strain DJ / ATCC BAA-1303).